The sequence spans 207 residues: Transcriptional regulator YqjI (207 aa).

Residues 1 to 40 show a composition bias toward basic and acidic residues; it reads MSHHHEGCCKHEGQPRHEGCCKGEKSEHEHCGHGHQHEHG. Residues 1–46 are disordered; that stretch reads MSHHHEGCCKHEGQPRHEGCCKGEKSEHEHCGHGHQHEHGQCCGGR.

In terms of assembly, oligomer (probable predominant form) and monomer.

Divalent metals such as nickel and iron have a similar negative effect on YqjI DNA-binding activity. Functionally, represses the expression of YqjH which is involved in iron homeostasis under excess nickel conditions. Also represses its own expression. The polypeptide is Transcriptional regulator YqjI (yqjI) (Escherichia coli (strain K12)).